Consider the following 61-residue polypeptide: Probable tautomerase LL0574 (61 aa).

Pro2 (proton acceptor; via imino nitrogen) is an active-site residue.

The protein belongs to the 4-oxalocrotonate tautomerase family.

The polypeptide is Probable tautomerase LL0574 (Lactococcus lactis subsp. lactis (strain IL1403) (Streptococcus lactis)).